A 65-amino-acid polypeptide reads, in one-letter code: Seminal plasma acrosin inhibitor A1 (65 aa).

The 59-residue stretch at 1–59 (TRKQPNCNVYRSHLFFCTRQMDPICGTNGKSYANPCIFCSEKGLRNQKFDFGHWGHCRE) folds into the Kazal-like domain. Disulfide bonds link cysteine 7-cysteine 39, cysteine 17-cysteine 36, and cysteine 25-cysteine 57. Serine 12 is a glycosylation site (O-linked (GalNAc...) serine). A glycan (O-linked (GalNAc...) serine) is linked at serine 62.

In terms of processing, the identity of the O-linked saccharides are not reported in Ref.1. The O-linked polysaccharides on Ser-12 and Ser-62 are probably the mucin type linked to GalNAc. As to expression, seminal plasma.

Its subcellular location is the secreted. In terms of biological role, inhibits acrosin. This Sus scrofa (Pig) protein is Seminal plasma acrosin inhibitor A1.